We begin with the raw amino-acid sequence, 586 residues long: Protein HOL1 (586 aa).

Residues 1-66 (MDKYTNRDHP…NWSSWRKLAH (66 aa)) are Extracellular-facing. The chain crosses the membrane as a helical span at residues 67–87 (FGLMAFITAFTAATSNDAGAA). Topologically, residues 88-103 (QDSLNEIYGISYDSMN) are cytoplasmic. The helical transmembrane segment at 104–124 (TGAGVLFLGIGWSTLFLAPFA) threads the bilayer. The Extracellular portion of the chain corresponds to 125-130 (NLYGRK). Residues 131-151 (ITYIVCTTLGLFGALWFALAK) form a helical membrane-spanning segment. Residues 152 to 189 (RTSDTIWSQLFVGISESCAEAQVQLSLSDIFFQHQLGS) are Cytoplasmic-facing. Residues 190–210 (VLTVYIMCTSIGTFLGPLIAG) traverse the membrane as a helical segment. The Extracellular portion of the chain corresponds to 211–219 (YISAFTNFR). Residues 220 to 240 (WVGWVAVIISGGLLITIIFGC) traverse the membrane as a helical segment. Over 241–362 (EETYFDRGQY…YFKYLKINLR (122 aa)) the chain is Cytoplasmic. A helical transmembrane segment spans residues 363–383 (MFLFPPVWLSGMFWGIQDVFL). The Extracellular segment spans residues 384 to 413 (TFYLTTQESAYYEPPWNYSDFGVAIMNVPT). A helical transmembrane segment spans residues 414–434 (LIGAVIGCICAGIVSDYFVLW). Residues 435-448 (MARHNRGILEAEFR) lie on the Cytoplasmic side of the membrane. A helical transmembrane segment spans residues 449–469 (LYFSIATAIIGPAGLLMFGIG). At 470 to 477 (TARQWPWQ) the chain is on the extracellular side. Residues 478–498 (AIYVGLGFVGFAWGCSGDIAM) form a helical membrane-spanning segment. Residues 499–508 (AYLMDCYPDM) lie on the Cytoplasmic side of the membrane. The chain crosses the membrane as a helical span at residues 509–529 (VLEGMVCTAIINNTISCIFTF). At 530–544 (TCSDWLAASGTENTY) the chain is on the extracellular side. Residues 545–565 (IALAVINFGITAFALPMYYYG) traverse the membrane as a helical segment. Topologically, residues 566 to 586 (KRIRLWTKRWYLQSVNLRDGV) are cytoplasmic.

The protein localises to the membrane. Functionally, seems to be involved in the uptake of several cations and of histidinol. The chain is Protein HOL1 (HOL1) from Saccharomyces cerevisiae (strain ATCC 204508 / S288c) (Baker's yeast).